Reading from the N-terminus, the 343-residue chain is Multidrug resistance protein MdtN (343 aa).

The Cytoplasmic portion of the chain corresponds to 1 to 12 (MESTPKKAPRSK). A helical; Signal-anchor for type II membrane protein transmembrane segment spans residues 13 to 33 (FPALLVVALALVALVFVIWRV). The Periplasmic portion of the chain corresponds to 34 to 343 (DSAPSTNDAY…ASAVANLEPQ (310 aa)).

The protein belongs to the membrane fusion protein (MFP) (TC 8.A.1) family. Could be part of a tripartite efflux system composed of MdtN, MdtO and MdtP.

It localises to the cell inner membrane. In terms of biological role, could be involved in resistance to puromycin, acriflavine and tetraphenylarsonium chloride. The polypeptide is Multidrug resistance protein MdtN (mdtN) (Shigella flexneri).